The following is a 226-amino-acid chain: Uridylate kinase (226 aa).

Residue 6 to 10 coordinates ATP; sequence KISGK. Gly43 contacts UMP. Residues Gly44 and Arg48 each coordinate ATP. UMP-binding positions include Asp65 and 113–119; that span reads FQPGQST. The ATP site is built by Thr139, Asn140, Tyr145, and Asp148.

The protein belongs to the UMP kinase family. Homohexamer.

Its subcellular location is the cytoplasm. The enzyme catalyses UMP + ATP = UDP + ADP. The protein operates within pyrimidine metabolism; CTP biosynthesis via de novo pathway; UDP from UMP (UMPK route): step 1/1. Its activity is regulated as follows. Inhibited by UTP. Functionally, catalyzes the reversible phosphorylation of UMP to UDP. This Saccharolobus islandicus (strain Y.N.15.51 / Yellowstone #2) (Sulfolobus islandicus) protein is Uridylate kinase.